The chain runs to 359 residues: tRNA-specific 2-thiouridylase MnmA (359 aa).

Residues 6 to 13 and Leu32 each bind ATP; that span reads AMSGGVDS. The Nucleophile role is filled by Cys97. A disulfide bond links Cys97 and Cys195. Gly121 provides a ligand contact to ATP. Positions 144 to 146 are interaction with tRNA; that stretch reads KDQ. Cys195 acts as the Cysteine persulfide intermediate in catalysis.

This sequence belongs to the MnmA/TRMU family.

It localises to the cytoplasm. It carries out the reaction S-sulfanyl-L-cysteinyl-[protein] + uridine(34) in tRNA + AH2 + ATP = 2-thiouridine(34) in tRNA + L-cysteinyl-[protein] + A + AMP + diphosphate + H(+). Its function is as follows. Catalyzes the 2-thiolation of uridine at the wobble position (U34) of tRNA, leading to the formation of s(2)U34. In Tropheryma whipplei (strain Twist) (Whipple's bacillus), this protein is tRNA-specific 2-thiouridylase MnmA.